The primary structure comprises 263 residues: Methylesterase 4 (263 aa).

Ser84 serves as the catalytic Acyl-ester intermediate. Active-site charge relay system residues include Asp213 and His241.

Belongs to the AB hydrolase superfamily. Methylesterase family.

The catalysed reaction is methyl salicylate + H2O = salicylate + methanol + H(+). The protein operates within plant hormone biosynthesis. Esterase activity is down-regulated by salicylic acid (SA). Its function is as follows. Methylesterase shown to have carboxylesterase activity and methyl salicylate (MeSA) esterase activity in vitro. This is Methylesterase 4 from Arabidopsis thaliana (Mouse-ear cress).